Consider the following 293-residue polypeptide: Glutamyl-Q tRNA(Asp) synthetase (293 aa).

Residues 8-12 (RFAPT) and glutamate 44 contribute to the L-glutamate site. Positions 11 to 21 (PTPSGYLHFGS) match the 'HIGH' region motif. Positions 100, 102, 114, and 118 each coordinate Zn(2+). 2 residues coordinate L-glutamate: tyrosine 171 and arginine 189. A 'KMSKS' region motif is present at residues 227 to 231 (KLGKS). Lysine 230 contacts ATP.

The protein belongs to the class-I aminoacyl-tRNA synthetase family. GluQ subfamily. Zn(2+) serves as cofactor.

Its function is as follows. Catalyzes the tRNA-independent activation of glutamate in presence of ATP and the subsequent transfer of glutamate onto a tRNA(Asp). Glutamate is transferred on the 2-amino-5-(4,5-dihydroxy-2-cyclopenten-1-yl) moiety of the queuosine in the wobble position of the QUC anticodon. The sequence is that of Glutamyl-Q tRNA(Asp) synthetase from Pseudomonas aeruginosa (strain LESB58).